The following is a 92-amino-acid chain: Defensin (92 aa).

The N-terminal stretch at 1 to 20 (MKFFVLVAIAFALLACVAQA) is a signal peptide. A propeptide spanning residues 21-52 (QPVSDVDPIPEDHVLVHEDAHQEVLQHSRQKR) is cleaved from the precursor. Disulfide bonds link C55-C82, C68-C88, and C72-C90.

Belongs to the invertebrate defensin family. Type 1 subfamily. In terms of tissue distribution, hemolymph (at protein level).

It localises to the secreted. Functionally, responsible for the anti Gram-positive activity of immune hemolymph. Expressed in the absence of immune challenge during metamorphosis. The sequence is that of Defensin (Def) from Drosophila melanogaster (Fruit fly).